The chain runs to 564 residues: Septation ring formation regulator EzrA (564 aa).

Residues 1–4 (MVLF) lie on the Extracellular side of the membrane. The helical transmembrane segment at 5 to 23 (IILAILVVILIAIGVLFYM) threads the bilayer. Over 24–564 (RSNKRNLIEK…KHIEEQVIKE (541 aa)) the chain is Cytoplasmic. Coiled-coil stretches lie at residues 84-126 (VEEK…HQVT), 165-223 (EAAE…LIRE), 271-303 (MISRLELDEANNKLENINDKLDEMYDLIEYEVK), and 350-435 (VRQF…RRLL).

This sequence belongs to the EzrA family.

The protein resides in the cell membrane. In terms of biological role, negative regulator of FtsZ ring formation; modulates the frequency and position of FtsZ ring formation. Inhibits FtsZ ring formation at polar sites. Interacts either with FtsZ or with one of its binding partners to promote depolymerization. This chain is Septation ring formation regulator EzrA, found in Staphylococcus epidermidis (strain ATCC 12228 / FDA PCI 1200).